Reading from the N-terminus, the 271-residue chain is GPN-loop GTPase 3 (271 aa).

Position 13–18 (13–18 (GAGKST)) interacts with GTP. The short motif at 70-72 (GPN) is the Gly-Pro-Asn (GPN)-loop; involved in dimer interface element. 173 to 176 (SKVD) is a binding site for GTP.

The protein belongs to the GPN-loop GTPase family. Heterodimers with GPN1 or GPN2. Binds to RNA polymerase II (RNAPII).

Functionally, small GTPase required for proper nuclear import of RNA polymerase II and III (RNAPII and RNAPIII). May act at an RNAP assembly step prior to nuclear import. This is GPN-loop GTPase 3 from Eremothecium gossypii (strain ATCC 10895 / CBS 109.51 / FGSC 9923 / NRRL Y-1056) (Yeast).